Here is a 463-residue protein sequence, read N- to C-terminus: Oxidoreductase OXR1 (463 aa).

6-hydroxy-FAD-binding positions include 59–63 (GGSYS), V154, and D366.

The protein belongs to the FAD-dependent oxidoreductase family. 6-hydroxy-FAD is required as a cofactor.

It participates in siderophore biosynthesis. In terms of biological role, oxidoreductase; part of the gene cluster that mediates the biosynthesis of hydroxamate-containing siderophores that play a critical role in virulence via intracellular iron acquisition during macrophage infection. The chain is Oxidoreductase OXR1 from Ajellomyces capsulatus (Darling's disease fungus).